We begin with the raw amino-acid sequence, 106 residues long: MTPFPNTCRSVQTVSSSNTVSMGFSINDACPKTLTAEAPINHSKVEIGEAKKPIGTATQTSPVYSWLVLKEPNGVTSSSPFSLFIPTIPATTRTITKSSNKFVNNV.

This is an uncharacterized protein from Saccharomyces cerevisiae (strain ATCC 204508 / S288c) (Baker's yeast).